The primary structure comprises 156 residues: Small ribosomal subunit protein uS7 (156 aa).

The protein belongs to the universal ribosomal protein uS7 family. In terms of assembly, part of the 30S ribosomal subunit. Contacts proteins S9 and S11.

In terms of biological role, one of the primary rRNA binding proteins, it binds directly to 16S rRNA where it nucleates assembly of the head domain of the 30S subunit. Is located at the subunit interface close to the decoding center, probably blocks exit of the E-site tRNA. This Caldanaerobacter subterraneus subsp. tengcongensis (strain DSM 15242 / JCM 11007 / NBRC 100824 / MB4) (Thermoanaerobacter tengcongensis) protein is Small ribosomal subunit protein uS7.